We begin with the raw amino-acid sequence, 213 residues long: Histone H1 (213 aa).

A compositionally biased stretch (low complexity) spans 1–25 (MAAATASAAATPAKKAAPKKPAAAP). Disordered regions lie at residues 1-30 (MAAA…HPSY) and 81-213 (GEFV…AKSS). Residues 26–97 (EHPSYKEMLT…GPSGTVKLAK (72 aa)) enclose the H15 domain. Low complexity-rich tracts occupy residues 102 to 113 (AAAPKKPAAKKA), 123 to 137 (KKAA…PKSA), 157 to 176 (KKAA…APVK), and 203 to 213 (PKKAATPAKSS).

The protein belongs to the histone H1/H5 family.

It is found in the nucleus. The protein localises to the chromosome. Its function is as follows. Could act as an H1-type linker histone. The chain is Histone H1 from Ascobolus immersus.